The following is a 291-amino-acid chain: 4-hydroxy-tetrahydrodipicolinate synthase (291 aa).

Thr-44 is a binding site for pyruvate. The active-site Proton donor/acceptor is the Tyr-132. The active-site Schiff-base intermediate with substrate is the Lys-161. Position 202 (Ile-202) interacts with pyruvate.

This sequence belongs to the DapA family. Homotetramer; dimer of dimers.

The protein localises to the cytoplasm. It catalyses the reaction L-aspartate 4-semialdehyde + pyruvate = (2S,4S)-4-hydroxy-2,3,4,5-tetrahydrodipicolinate + H2O + H(+). The protein operates within amino-acid biosynthesis; L-lysine biosynthesis via DAP pathway; (S)-tetrahydrodipicolinate from L-aspartate: step 3/4. Its function is as follows. Catalyzes the condensation of (S)-aspartate-beta-semialdehyde [(S)-ASA] and pyruvate to 4-hydroxy-tetrahydrodipicolinate (HTPA). This Endomicrobium trichonymphae protein is 4-hydroxy-tetrahydrodipicolinate synthase.